A 229-amino-acid polypeptide reads, in one-letter code: Peptidase E (229 aa).

Residues serine 120, aspartate 135, and histidine 157 each act as charge relay system in the active site.

The protein belongs to the peptidase S51 family.

It localises to the cytoplasm. It catalyses the reaction Dipeptidase E catalyzes the hydrolysis of dipeptides Asp-|-Xaa. It does not act on peptides with N-terminal Glu, Asn or Gln, nor does it cleave isoaspartyl peptides.. In terms of biological role, hydrolyzes dipeptides containing N-terminal aspartate residues. May play a role in allowing the cell to use peptide aspartate to spare carbon otherwise required for the synthesis of the aspartate family of amino acids. This Salmonella arizonae (strain ATCC BAA-731 / CDC346-86 / RSK2980) protein is Peptidase E.